The sequence spans 176 residues: Disulfide bond formation protein B (176 aa).

Residues 1–14 (MMRSLNRCSKHRAA) are Cytoplasmic-facing. The helical transmembrane segment at 15 to 31 (WLLLALTTFSLELVALY) threads the bilayer. The Periplasmic segment spans residues 32 to 49 (FQHVMLLKPCVLCVYQRC). Cys41 and Cys44 are oxidised to a cystine. Residues 50–65 (ALYGVVAAGLVGAIAP) traverse the membrane as a helical segment. At 66 to 71 (ATPLRF) the chain is on the cytoplasmic side. A helical membrane pass occupies residues 72-89 (SGLAIWLYSAWEGLQLAM). Residues 90–144 (KHTDIQLHPSPFVTCDFFVSFPAWLPLDKWLPSVFSASGDCAVRQWHFLSLEMPQ) lie on the Periplasmic side of the membrane. Cys104 and Cys130 form a disulfide bridge. The helical transmembrane segment at 145 to 163 (WMIVIFGAYLAVAVLILLA) threads the bilayer. Over 164 to 176 (QFFPPRKRDLFSR) the chain is Cytoplasmic.

This sequence belongs to the DsbB family.

The protein resides in the cell inner membrane. Required for disulfide bond formation in some periplasmic proteins. Acts by oxidizing the DsbA protein. The sequence is that of Disulfide bond formation protein B from Sodalis glossinidius (strain morsitans).